Reading from the N-terminus, the 96-residue chain is Acylphosphatase (96 aa).

Residues 11-96 (ARRWYVRGRV…ITSYDSFRIR (86 aa)) enclose the Acylphosphatase-like domain. Residues R26 and N44 contribute to the active site.

Belongs to the acylphosphatase family.

It catalyses the reaction an acyl phosphate + H2O = a carboxylate + phosphate + H(+). In Solibacter usitatus (strain Ellin6076), this protein is Acylphosphatase (acyP).